The sequence spans 324 residues: Succinylglutamate desuccinylase (324 aa).

Zn(2+)-binding residues include His53, Glu56, and His148. Residue Glu211 is part of the active site.

The protein belongs to the AspA/AstE family. Succinylglutamate desuccinylase subfamily. The cofactor is Zn(2+).

It catalyses the reaction N-succinyl-L-glutamate + H2O = L-glutamate + succinate. Its pathway is amino-acid degradation; L-arginine degradation via AST pathway; L-glutamate and succinate from L-arginine: step 5/5. In terms of biological role, transforms N(2)-succinylglutamate into succinate and glutamate. In Acinetobacter baumannii (strain AB0057), this protein is Succinylglutamate desuccinylase.